Here is a 48-residue protein sequence, read N- to C-terminus: Large ribosomal subunit protein bL33A (48 aa).

Belongs to the bacterial ribosomal protein bL33 family.

This Shouchella clausii (strain KSM-K16) (Alkalihalobacillus clausii) protein is Large ribosomal subunit protein bL33A.